Here is a 262-residue protein sequence, read N- to C-terminus: 3-methyl-2-oxobutanoate hydroxymethyltransferase (262 aa).

Residues D42 and D81 each coordinate Mg(2+). 3-methyl-2-oxobutanoate contacts are provided by residues 42–43, D81, and K110; that span reads DS. Position 112 (E112) interacts with Mg(2+). E179 acts as the Proton acceptor in catalysis.

This sequence belongs to the PanB family. Homodecamer; pentamer of dimers. It depends on Mg(2+) as a cofactor.

It is found in the cytoplasm. The enzyme catalyses 3-methyl-2-oxobutanoate + (6R)-5,10-methylene-5,6,7,8-tetrahydrofolate + H2O = 2-dehydropantoate + (6S)-5,6,7,8-tetrahydrofolate. Its pathway is cofactor biosynthesis; (R)-pantothenate biosynthesis; (R)-pantoate from 3-methyl-2-oxobutanoate: step 1/2. In terms of biological role, catalyzes the reversible reaction in which hydroxymethyl group from 5,10-methylenetetrahydrofolate is transferred onto alpha-ketoisovalerate to form ketopantoate. The sequence is that of 3-methyl-2-oxobutanoate hydroxymethyltransferase from Methylobacillus flagellatus (strain ATCC 51484 / DSM 6875 / VKM B-1610 / KT).